Here is a 146-residue protein sequence, read N- to C-terminus: Transcriptional regulator MraZ (146 aa).

SpoVT-AbrB domains lie at 9-55 (TSAL…PRPV) and 81-124 (AMDV…DAQR).

Belongs to the MraZ family. In terms of assembly, forms oligomers.

Its subcellular location is the cytoplasm. It localises to the nucleoid. This Leptothrix cholodnii (strain ATCC 51168 / LMG 8142 / SP-6) (Leptothrix discophora (strain SP-6)) protein is Transcriptional regulator MraZ.